Consider the following 564-residue polypeptide: Threonine--tRNA ligase (564 aa).

The catalytic stretch occupies residues 167-464 (DHRSLGKQLE…LLEKTSGNFP (298 aa)). Zn(2+) is bound by residues cysteine 260, histidine 311, and histidine 441.

Belongs to the class-II aminoacyl-tRNA synthetase family. Homodimer. Zn(2+) is required as a cofactor.

The protein resides in the cytoplasm. The enzyme catalyses tRNA(Thr) + L-threonine + ATP = L-threonyl-tRNA(Thr) + AMP + diphosphate + H(+). Its function is as follows. Catalyzes the attachment of threonine to tRNA(Thr) in a two-step reaction: L-threonine is first activated by ATP to form Thr-AMP and then transferred to the acceptor end of tRNA(Thr). Also edits incorrectly charged L-seryl-tRNA(Thr). This chain is Threonine--tRNA ligase, found in Mycoplasma genitalium (strain ATCC 33530 / DSM 19775 / NCTC 10195 / G37) (Mycoplasmoides genitalium).